We begin with the raw amino-acid sequence, 213 residues long: Thiopurine S-methyltransferase (213 aa).

4 residues coordinate S-adenosyl-L-methionine: W10, L45, E66, and R121.

The protein belongs to the class I-like SAM-binding methyltransferase superfamily. TPMT family.

It localises to the cytoplasm. It catalyses the reaction S-adenosyl-L-methionine + a thiopurine = S-adenosyl-L-homocysteine + a thiopurine S-methylether.. This is Thiopurine S-methyltransferase from Aliivibrio salmonicida (strain LFI1238) (Vibrio salmonicida (strain LFI1238)).